The primary structure comprises 596 residues: Aspartate--tRNA(Asp/Asn) ligase (596 aa).

E182 serves as a coordination point for L-aspartate. The aspartate stretch occupies residues 206 to 209 (QLFK). R228 serves as a coordination point for L-aspartate. ATP is bound by residues 228–230 (RDE) and Q237. H456 provides a ligand contact to L-aspartate. E490 contacts ATP. An L-aspartate-binding site is contributed by R497. Residue 542–545 (GLDR) coordinates ATP.

This sequence belongs to the class-II aminoacyl-tRNA synthetase family. Type 1 subfamily. Homodimer.

The protein localises to the cytoplasm. It carries out the reaction tRNA(Asx) + L-aspartate + ATP = L-aspartyl-tRNA(Asx) + AMP + diphosphate. Aspartyl-tRNA synthetase with relaxed tRNA specificity since it is able to aspartylate not only its cognate tRNA(Asp) but also tRNA(Asn). Reaction proceeds in two steps: L-aspartate is first activated by ATP to form Asp-AMP and then transferred to the acceptor end of tRNA(Asp/Asn). The polypeptide is Aspartate--tRNA(Asp/Asn) ligase (Syntrophotalea carbinolica (strain DSM 2380 / NBRC 103641 / GraBd1) (Pelobacter carbinolicus)).